The primary structure comprises 55 residues: Large ribosomal subunit protein bL33 (55 aa).

The protein belongs to the bacterial ribosomal protein bL33 family.

The sequence is that of Large ribosomal subunit protein bL33 from Xanthomonas oryzae pv. oryzae (strain PXO99A).